Reading from the N-terminus, the 148-residue chain is Nodulation protein NolJ (148 aa).

Acidic residues predominate over residues 66 to 78 (ADEAMEETEEDAD). Disordered regions lie at residues 66–93 (ADEA…VSDG) and 124–148 (AAKG…RGYG). The segment covering 124–136 (AAKGAGAAVPGPN) has biased composition (low complexity).

Functionally, involved in efficiency of soybean nodulation and in nodulation delay. The protein is Nodulation protein NolJ (nolJ) of Rhizobium fredii (Sinorhizobium fredii).